Consider the following 402-residue polypeptide: Type II NADH:quinone oxidoreductase (402 aa).

Residues 12-16 (GAGYA), 39-40 (NK), and V83 each bind FAD. The active site involves E172. Residues D302, 319-320 (AQ), and K379 contribute to the FAD site.

Belongs to the NADH dehydrogenase family. FAD serves as cofactor.

The protein localises to the cell membrane. The enzyme catalyses a quinone + NADH + H(+) = a quinol + NAD(+). Functionally, alternative, nonproton pumping NADH:quinone oxidoreductase that delivers electrons to the respiratory chain by oxidation of NADH and reduction of quinones, and contributes to the regeneration of NAD(+). The polypeptide is Type II NADH:quinone oxidoreductase (Staphylococcus aureus (strain bovine RF122 / ET3-1)).